Consider the following 128-residue polypeptide: MGLMWGLFSVIIASAAQLSMGFAASHLPPMTHLWDFIAALLAFGLDARILLLGLLGYLLSVFCWYKTLHKLALSKAYALLSMSYVLVWIASMVLPGWEGTFSLKALLGVACIMSGLMLIFLPTTKQRY.

Residues 1–2 (MG) are Cytoplasmic-facing. The chain crosses the membrane as a helical span at residues 3–23 (LMWGLFSVIIASAAQLSMGFA). The Periplasmic portion of the chain corresponds to 24–35 (ASHLPPMTHLWD). A helical membrane pass occupies residues 36-56 (FIAALLAFGLDARILLLGLLG). Over 57–76 (YLLSVFCWYKTLHKLALSKA) the chain is Cytoplasmic. The chain crosses the membrane as a helical span at residues 77-97 (YALLSMSYVLVWIASMVLPGW). At 98-100 (EGT) the chain is on the periplasmic side. The chain crosses the membrane as a helical span at residues 101–121 (FSLKALLGVACIMSGLMLIFL). The Cytoplasmic segment spans residues 122–128 (PTTKQRY).

This sequence belongs to the ArnF family. In terms of assembly, heterodimer of ArnE and ArnF.

It localises to the cell inner membrane. It participates in bacterial outer membrane biogenesis; lipopolysaccharide biosynthesis. Translocates 4-amino-4-deoxy-L-arabinose-phosphoundecaprenol (alpha-L-Ara4N-phosphoundecaprenol) from the cytoplasmic to the periplasmic side of the inner membrane. This chain is Probable 4-amino-4-deoxy-L-arabinose-phosphoundecaprenol flippase subunit ArnF, found in Escherichia coli O45:K1 (strain S88 / ExPEC).